Reading from the N-terminus, the 1477-residue chain is Neurexin-1 (1477 aa).

The N-terminal stretch at 1 to 30 (MGTALLQRGGCFLLCLSLLLLGCWAELGSG) is a signal peptide. In terms of domain architecture, Laminin G-like 1 spans 31–217 (LEFPGAEGQW…PPNSGGGSPC (187 aa)). Over 31 to 1401 (LEFPGAEGQW…EVIRESSSTT (1371 aa)) the chain is Extracellular. N-linked (GlcNAc...) asparagine glycosylation is found at asparagine 125 and asparagine 190. The tract at residues 198–221 (DSGEVKLDDEPPNSGGGSPCEAGE) is disordered. One can recognise an EGF-like 1 domain in the interval 213 to 256 (GGSPCEAGEEGEGGVCLNGGVCSVVDDQAVCDCSRTGFRGKDCS). 2 disulfides stabilise this stretch: cysteine 228-cysteine 243 and cysteine 245-cysteine 255. Laminin G-like domains lie at 283 to 473 (IATF…AFKC) and 480 to 672 (DPIT…KPSC). The Ca(2+) site is built by aspartate 329, leucine 346, and methionine 407. Cystine bridges form between cysteine 437-cysteine 473, cysteine 643-cysteine 672, cysteine 680-cysteine 691, cysteine 685-cysteine 700, and cysteine 702-cysteine 712. The EGF-like 2 domain maps to 676–713 (TAKPCLSNPCKNNGMCRDGWNRYVCDCSGTGYLGRSCE). 2 consecutive Laminin G-like domains span residues 718-891 (VLSY…IDYC) and 905-1080 (DPVT…ERGC). Ca(2+) contacts are provided by aspartate 765 and leucine 782. Asparagine 790 carries an N-linked (GlcNAc...) asparagine glycan. Residue arginine 841 participates in Ca(2+) binding. Cystine bridges form between cysteine 883/cysteine 891, cysteine 1052/cysteine 1080, cysteine 1087/cysteine 1098, cysteine 1092/cysteine 1107, and cysteine 1109/cysteine 1119. Residues 1083-1120 (PSTTCQEDSCSNQGVCLQQWDGFSCDCSMTSFSGPLCN) form the EGF-like 3 domain. A Laminin G-like 6 domain is found at 1126 to 1294 (YIFSKGGGQI…DANIAIVGNV (169 aa)). Residues aspartate 1176 and valine 1193 each contribute to the Ca(2+) site. Asparagine 1223 is a glycosylation site (N-linked (GlcNAc...) asparagine). Ca(2+)-binding residues include isoleucine 1245 and asparagine 1247. Residues 1325–1390 (TTTLATSTAR…AGGREPYPGS (66 aa)) form a disordered region. Serine 1355 carries O-linked (Xyl...) (heparan sulfate) serine glycosylation. A helical transmembrane segment spans residues 1402–1422 (GMVVGIVAAAALCILILLYAM). Topologically, residues 1423-1477 (YKYRNRDEGSYHVDESRNYISNSAQSNGAVVKEKQPSSAKSSNKNKKNKDKEYYV) are cytoplasmic. The tract at residues 1444–1470 (NSAQSNGAVVKEKQPSSAKSSNKNKKN) is interaction with CASK. Positions 1444–1477 (NSAQSNGAVVKEKQPSSAKSSNKNKKNKDKEYYV) are disordered.

Belongs to the neurexin family. As to quaternary structure, interacts (via laminin G-like domain 2 and/or laminin G-like domain 6) with NLGN1 forming a heterotetramer, where one NLGN1 dimer interacts with one NRXN1 dimer. Also interacts (via laminin G-like domain 2 and/or laminin G-like domain 6) with NLGN2, NLGN3 and NLGN4L; interactions with NLGN1, NLGN2, NLGN3 and NLGN4L are calcium-dependent. Interacts (via cytoplasmic C-terminal region) with CASK (via the PDZ, SH3 and guanylate kinase-like domains). Interacts (via cytoplasmic C-terminus) with CASKIN1 and APBA1. Interacts (via laminin G-like domain 2) with NXPH1 and NXPH3. Alpha-type isoforms (neurexin-1-alpha) interact (via laminin G-like domain 2 and/or laminin G-like domain 6) with DAG1 (via alpha-dystroglycan chain). Interacts with LRRTM1, LRRTM2, LRRTM3 and LRRTM4. Interacts with SYT13 and SYTL1. Interacts with CBLN1, CBLN2 and, less avidly, with CBLN4. Interacts with CLSTN3. O-glycosylated; contains heparan sulfate. Heparan sulfate attachment is required for synapse development by mediating interactions with neuroligins and LRRTM2. In terms of tissue distribution, brain.

It is found in the presynaptic cell membrane. Its function is as follows. Cell surface protein involved in cell-cell-interactions, exocytosis of secretory granules and regulation of signal transmission. Function is isoform-specific. Alpha-type isoforms have a long N-terminus with six laminin G-like domains and play an important role in synaptic signal transmission. Alpha-type isoforms play a role in the regulation of calcium channel activity and Ca(2+)-triggered neurotransmitter release at synapses and at neuromuscular junctions. They play an important role in Ca(2+)-triggered exocytosis of secretory granules in pituitary gland. They may affect their functions at synapses and in endocrine cells via their interactions with proteins from the exocytotic machinery. Likewise, alpha-type isoforms play a role in regulating the activity of postsynaptic NMDA receptors, a subtype of glutamate-gated ion channels. Both alpha-type and beta-type isoforms may play a role in the formation or maintenance of synaptic junctions via their interactions (via the extracellular domains) with neuroligin family members, CBLN1 or CBLN2. In vitro, triggers the de novo formation of presynaptic structures. May be involved in specification of excitatory synapses. Alpha-type isoforms were first identified as receptors for alpha-latrotoxin from spider venom. The protein is Neurexin-1 (NRXN1) of Homo sapiens (Human).